The sequence spans 397 residues: 1-deoxy-D-xylulose 5-phosphate reductoisomerase (397 aa).

6 residues coordinate NADPH: Thr17, Gly18, Ser19, Ile20, Asn47, and Asn130. A 1-deoxy-D-xylulose 5-phosphate-binding site is contributed by Lys131. Glu132 provides a ligand contact to NADPH. Position 156 (Asp156) interacts with Mn(2+). Ser157, Glu158, Ser182, and His205 together coordinate 1-deoxy-D-xylulose 5-phosphate. Glu158 is a binding site for Mn(2+). Gly211 provides a ligand contact to NADPH. 1-deoxy-D-xylulose 5-phosphate contacts are provided by Ser218, Asn223, Lys224, and Glu227. Residue Glu227 participates in Mn(2+) binding.

Belongs to the DXR family. Mg(2+) serves as cofactor. Mn(2+) is required as a cofactor.

The catalysed reaction is 2-C-methyl-D-erythritol 4-phosphate + NADP(+) = 1-deoxy-D-xylulose 5-phosphate + NADPH + H(+). The protein operates within isoprenoid biosynthesis; isopentenyl diphosphate biosynthesis via DXP pathway; isopentenyl diphosphate from 1-deoxy-D-xylulose 5-phosphate: step 1/6. In terms of biological role, catalyzes the NADPH-dependent rearrangement and reduction of 1-deoxy-D-xylulose-5-phosphate (DXP) to 2-C-methyl-D-erythritol 4-phosphate (MEP). The sequence is that of 1-deoxy-D-xylulose 5-phosphate reductoisomerase from Rhizobium rhizogenes (strain K84 / ATCC BAA-868) (Agrobacterium radiobacter).